A 2694-amino-acid polypeptide reads, in one-letter code: MDVKERRPYCSLTKSRREKERRYTGSSGDSEDCRVPTQKSYSSSETLKAFDHDSSRLLYGGHVKEMVHREADEYSRQGQNFNLRQLGICEPATRRGLAFCAEMGMPSSLSSPSVTEHSHSQPPSPNLHDNQSSILSNATTQAVQDSDSEEEYTAVLYRPVTQPAPSHSCNEQPSNQHQQGQSTLPPVPPPHKQQPSVTALNHNSLSSRRNVSPAPPAALPAELQTTPESVPLQDSWVLGSNVPLESRHFLFKTGTGTTPLFSTATPGYTMATGAVYSPPTRPLPRNTLSRSAFKFKKSSKYCSWRCTALSAMAVSILLSVLLCYCIAMHLFGLNWQLQETEGYAFENGQVKSDSTATNAVTALSTENKVYFQENNTIDTGEVDVGRRAVQDVPPGTFWRTQLFIDQPQSLKFNISVQRGALVGVYGRKGLPPTHTQYDFVELLDGSRLIAKEKRGLVEVEGAARKARSVNVHEAEFIRFLDSGTWHLAFYNDGKNAEQVSYNTIIIDTLTECPHNCHGNGDCRTGTCHCFPGFLGPDCSRAACPVLCSGNGQYSRGRCLCYSGWKGTECDVPSNQCIDIHCSGHGICIMGTCACNTGYKGDNCEEVDCLDPSCSSHGVCIHGECHCNPGWGGNNCEILKTMCPDQCSGHGTYQTESGTCTCDTNWTGPDCSIEVCAVDCGSHGVCIGGSCRCEEGWTGSVCDLKACHPRCTEHGTCKDGKCECHQGWTGEHCTVEGCPGLCNSNGRCTLDQNGWHCVCQPGWRGAGCDVAMETLCADGKDNEGDGLVDCMDPDCCLQSSCQTQPFCRGSPDPIDIISQNQPASPQQAAQSFYQQISFLTGPESTHVINGENPFNRSLVSIIRGQVLTADGTPLIGVNVSFVHYPDHGYTITRQDGMFDILANGGASLTLSFERAPFLTQFRTVWIPWNVFYVMDTLVMKKEENDIPSCDLSGFIRPSPLIVATPLSTFFRSSPENGPIIPETQVLQEETAIPGSDLNLMYLSSRAAGYRPVLKVTMTQATIPFNLMKVHLMVAVVGRLFQKWFPAEPNLSYTFIWDKTDAYNQRVYGLSEAVVSVGFEYESCLDLILWEKRTAILQGYELDASNMGGWTLDKHHVLDVQNGILYKGNGENVFVSQQPPVISTIMGNGRRRSISCPSCNGQADGNKLLAPVALACGSDGSLFVGDFNYIRRIFPSGNVTSVMELSNNPAHRYYLATDPMTGQLYVSDTNSRRIFRPKALTGTKELLQNAEVVAGTGEQCLPFDEARCGDGGKATEALLLGPKGIAVDKNGFIYFVDGTMIRKVDRNGIISTLLGSNDLTSARPLTCDNSMHIGQVRLEWPTDLAINPMDNSIYVLDNNVVLQITENRQVRIVAGRPMHCQVPGIEYTMGKRAIQTTLEGATAISLSYSGVLYIAETDEKKINRIRQVSTDGEISHLAGAPSDCDCKNDANCDCYQTGDGYAKDARLNAPSSLVVSPDGTLYVADLGNIRIRAIRHNRPPQGSSGLFEVASPASQELYVFDSNGTHQYTMSLVTGDYKYNFSYSNEDDVTAVTDSSGNTLRVRRDPNRMPVRIVAPDNQVIWLTIGTNGGLKTLTAQGQELVLFTYHGNSGLLATKSIQIGWTTFYDYDSEGRLTNVTFPTGVITSLIGEMDRALTVDIETSGRDDDVSITTNLSSIDSFYTLVQDQLRNSYQVGYDNSMRVIYANGMDSHFQTEPHILAGASNPTVARRNMTLPGENGQNLVEWRFRKEQNRGKVVVFGRKLRVNGRNLLSVDYDRSLRTEKIYDDHRKFLLKIVYDASGHPTLWVPSSKLMSVNLTYSSTGQVTSLQRGPTTERVEYDSQGRIVSRTFADAKIWSYTYLDKSMVLLLHSQRQYIFDYDLQDRLSAITMPSVARHTMQTIRSVGYYRNIYNPPESNASVTVDYSEDGQLLRVAHLGTGRRVLYKYRRQNKLSEILYDSTRVSFTYDETAGVLKTVNLQSEGFICSIRYRQIGPLVDRQIFRFSEDGMVNARFDYTYDNSFRVTSMQGVINETPLPIDLYQFDDISGKVEQFGKFGVIYYDINQIISTAVMTYTKHFDVHGRIKEIQYEIFRSLMYWITIQYDNMGRVTKREIKIGPFANTTKYGYEYDVDGQLQTVYLNEKMMWRYNYDLNGNLHLLNPGNSARLTPLRYDLRDRITRLGDVQYRMDEDGFLRQRGAEIFEYNSKGLLVRVHSKASGWTIQYRYDGLGRRLASRNSLGQHLQFFYADLNYPTRITHVYNHSSSEITSLYYDLQGHLFAMEISSGEEFYIACDNTGTPLAVFSSNGLLLKQVQYTAYGEIYFDSNPDFQLVIGFHGGLYDPLTRLLHFGERDYDIQAGRWTTPDISTWTRVGKDPAPFNLYMFRNNNPISKIHEVKEYVTDVNIWLVTFGFHLHNVIPGFPIPKFDLTQPSLEMRKSQLWDDLPSISGVQQEVMRQAKAFLSFERMPEIQLSRRRSSREKPWLWFATVKSLIGKGVMLAITSKGQVATNALNIANEDCIKVATVLNNAFYLEDLHFTVEGRDTHYFIKTSLPESDLGALRLTSGRKSLENGVNVTVSQSTTVVNGRTRRFADVELQYGALALHVRYGMTLDEEKARVLEQARQRALSSAWAREQQRVRDGEEGVRLWTEGEKRQLLSSGKVLGYDGYYVLSVEQYPELADSANNVQFLRQSEIGKR.

Disordered regions lie at residues 1-45 (MDVK…SSSE), 106-132 (PSSLSSPSVTEHSHSQPPSPNLHDNQS), and 161-198 (TQPAPSHSCNEQPSNQHQQGQSTLPPVPPPHKQQPSVT). Residues 1-306 (MDVKERRPYC…KSSKYCSWRC (306 aa)) enclose the Teneurin N-terminal domain. Residues 1–312 (MDVKERRPYC…SWRCTALSAM (312 aa)) are Cytoplasmic-facing. A compositionally biased stretch (polar residues) spans 163-184 (PAPSHSCNEQPSNQHQQGQSTL). The chain crosses the membrane as a helical span at residues 313-333 (AVSILLSVLLCYCIAMHLFGL). Over 334–2694 (NWQLQETEGY…FLRQSEIGKR (2361 aa)) the chain is Extracellular. Residues Asn374 and Asn413 are each glycosylated (N-linked (GlcNAc...) asparagine). 8 EGF-like domains span residues 508-539 (TLTECPHNCHGNGDCRTGTCHCFPGFLGPDCS), 540-570 (RAACPVLCSGNGQYSRGRCLCYSGWKGTECD), 572-604 (PSNQCIDIHCSGHGICIMGTCACNTGYKGDNCE), 605-636 (EVDCLDPSCSSHGVCIHGECHCNPGWGGNNCE), 638-671 (LKTMCPDQCSGHGTYQTESGTCTCDTNWTGPDCS), 672-703 (IEVCAVDCGSHGVCIGGSCRCEEGWTGSVCDL), 704-733 (KACHPRCTEHGTCKDGKCECHQGWTGEHCT), and 734-768 (VEGCPGLCNSNGRCTLDQNGWHCVCQPGWRGAGCD). 22 disulfide bridges follow: Cys512–Cys522, Cys516–Cys527, Cys529–Cys538, Cys547–Cys558, Cys560–Cys569, Cys576–Cys587, Cys581–Cys592, Cys594–Cys603, Cys608–Cys619, Cys613–Cys624, Cys626–Cys635, Cys646–Cys659, Cys661–Cys670, Cys675–Cys685, Cys679–Cys690, Cys692–Cys701, Cys706–Cys716, Cys710–Cys721, Cys723–Cys732, Cys737–Cys747, Cys741–Cys756, and Cys758–Cys767. The N-linked (GlcNAc...) asparagine glycan is linked to Asn664. Asn854, Asn877, and Asn1048 each carry an N-linked (GlcNAc...) asparagine glycan. 5 NHL repeats span residues 1166–1192 (LLAPVALACGSDGSLFVGDFNYIRRIF), 1194–1238 (SGNV…PKAL), 1264–1308 (ARCG…NGII), 1325–1365 (CDNS…ITEN), and 1452–1495 (CYQT…IRHN). A glycan (N-linked (GlcNAc...) asparagine) is linked at Asn1196. Residues 1505 to 1524 (FEVASPASQELYVFDSNGTH) form a YD 1 repeat. N-linked (GlcNAc...) asparagine glycosylation is found at Asn1521 and Asn1538. YD repeat units follow at residues 1541-1561 (YSNEDDVTAVTDSSGNTLRVR), 1604-1623 (YHGNSGLLATKSIQIGWTTF), and 1624-1646 (YDYDSEGRLTNVTFPTGVITSLI). N-linked (GlcNAc...) asparagine glycans are attached at residues Asn1634, Asn1671, Asn1729, and Asn1814. YD repeat units lie at residues 1817–1836 (YSSTGQVTSLQRGPTTERVE), 1858–1876 (YLDKSMVLLLHSQRQYIFD), 1877–1897 (YDLQDRLSAITMPSVARHTMQ), 1904–1921 (YYRNIYNPPESNASVTVD), 1922–1943 (YSEDGQLLRVAHLGTGRRVLYK), 1944–1961 (YRRQNKLSEILYDSTRVS), 1964–1984 (YDETAGVLKTVNLQSEGFICS), 1987–2007 (YRQIGPLVDRQIFRFSEDGMV), 2015–2034 (YDNSFRVTSMQGVINETPLP), 2040–2057 (FDDISGKVEQFGKFGVIY), 2058–2084 (YDINQIISTAVMTYTKHFDVHGRIKEI), 2086–2099 (YEIFRSLMYWITIQ), 2100–2123 (YDNMGRVTKREIKIGPFANTTKYG), 2126–2146 (YDVDGQLQTVYLNEKMMWRYN), 2147–2167 (YDLNGNLHLLNPGNSARLTPL), 2169–2189 (YDLRDRITRLGDVQYRMDEDG), 2201–2221 (YNSKGLLVRVHSKASGWTIQY), and 2223–2243 (YDGLGRRLASRNSLGQHLQFF). An N-linked (GlcNAc...) asparagine glycan is attached at Asn1915. Asn2118 is a glycosylation site (N-linked (GlcNAc...) asparagine). N-linked (GlcNAc...) asparagine glycosylation occurs at Asn2258. A YD 23 repeat occupies 2269-2310 (YDLQGHLFAMEISSGEEFYIACDNTGTPLAVFSSNGLLLKQV). Asn2571 carries an N-linked (GlcNAc...) asparagine glycan.

The protein belongs to the tenascin family. Teneurin subfamily. Homodimer; disulfide-linked; to mediate homophilic cell adhesion. Expressed by retinal ganglion cells and their presynaptic amacrine and postsynaptic tectal cell targets.

Its subcellular location is the cell membrane. The protein resides in the cell projection. The protein localises to the axon. Involved in neural development by regulating the establishment of proper connectivity within the nervous system. Acts in both pre- and postsynaptic neurons in the hippocampus to control the assembly of a precise topographic projection: required in both CA1 and subicular neurons for the precise targeting of proximal CA1 axons to distal subiculum, probably by promoting homophilic cell adhesion. Required by retinal ganglion cells for acquisition of their correct morphological and functional connectivity, thereby playing a key role in the development of the visual pathway. The protein is Teneurin-3 (tenm3) of Danio rerio (Zebrafish).